The following is a 160-amino-acid chain: Phosphopantetheine adenylyltransferase (160 aa).

Residue Ser-10 coordinates substrate. ATP is bound by residues 10–11 (SF) and His-18. The substrate site is built by Lys-42, Leu-74, and Arg-88. ATP is bound by residues 89–91 (GLR), Glu-99, and 124–130 (YSFLSSS).

It belongs to the bacterial CoaD family. In terms of assembly, homohexamer. Mg(2+) serves as cofactor.

It is found in the cytoplasm. The catalysed reaction is (R)-4'-phosphopantetheine + ATP + H(+) = 3'-dephospho-CoA + diphosphate. It functions in the pathway cofactor biosynthesis; coenzyme A biosynthesis; CoA from (R)-pantothenate: step 4/5. Its function is as follows. Reversibly transfers an adenylyl group from ATP to 4'-phosphopantetheine, yielding dephospho-CoA (dPCoA) and pyrophosphate. This is Phosphopantetheine adenylyltransferase from Bacillus pumilus (strain SAFR-032).